The sequence spans 360 residues: Photosystem II protein D1 3 (360 aa).

The next 3 helical transmembrane spans lie at 29–46, 118–133, and 142–156; these read YVGWFGVLMIPTLLTATI, HFLLGISCYMGRQWEL, and WICVAYSAPLSAAFA. Chlorophyll a is bound at residue His-118. Tyr-126 contributes to the pheophytin a binding site. The [CaMn4O5] cluster site is built by Asp-170 and Glu-189. A helical membrane pass occupies residues 197–218; that stretch reads FHMLGVAGVFGGSLFSAMHGSL. His-198 lines the chlorophyll a pocket. Residues His-215 and 264–265 contribute to the a quinone site; that span reads SF. His-215 contacts Fe cation. Position 272 (His-272) interacts with Fe cation. Residues 274–288 form a helical membrane-spanning segment; that stretch reads FLGAWPVVGIWFTSM. Positions 332, 333, 342, and 344 each coordinate [CaMn4O5] cluster. Residues 345 to 360 constitute a propeptide that is removed on maturation; sequence AGEATPVALTAPSIHG.

It belongs to the reaction center PufL/M/PsbA/D family. As to quaternary structure, PSII is composed of 1 copy each of membrane proteins PsbA, PsbB, PsbC, PsbD, PsbE, PsbF, PsbH, PsbI, PsbJ, PsbK, PsbL, PsbM, PsbT, PsbX, PsbY, PsbZ, Psb30/Ycf12, peripheral proteins PsbO, CyanoQ (PsbQ), PsbU, PsbV and a large number of cofactors. It forms dimeric complexes. The D1/D2 heterodimer binds P680, chlorophylls that are the primary electron donor of PSII, and subsequent electron acceptors. It shares a non-heme iron and each subunit binds pheophytin, quinone, additional chlorophylls, carotenoids and lipids. D1 provides most of the ligands for the Mn4-Ca-O5 cluster of the oxygen-evolving complex (OEC). There is also a Cl(-1) ion associated with D1 and D2, which is required for oxygen evolution. The PSII complex binds additional chlorophylls, carotenoids and specific lipids. is required as a cofactor. Post-translationally, tyr-161 forms a radical intermediate that is referred to as redox-active TyrZ, YZ or Y-Z. In terms of processing, C-terminally processed by CtpA; processing is essential to allow assembly of the oxygen-evolving complex and thus photosynthetic growth.

The protein localises to the cellular thylakoid membrane. It catalyses the reaction 2 a plastoquinone + 4 hnu + 2 H2O = 2 a plastoquinol + O2. Its function is as follows. Photosystem II (PSII) is a light-driven water:plastoquinone oxidoreductase that uses light energy to abstract electrons from H(2)O, generating O(2) and a proton gradient subsequently used for ATP formation. It consists of a core antenna complex that captures photons, and an electron transfer chain that converts photonic excitation into a charge separation. The D1/D2 (PsbA/PsbD) reaction center heterodimer binds P680, the primary electron donor of PSII as well as several subsequent electron acceptors. This chain is Photosystem II protein D1 3, found in Synechococcus sp. (strain ATCC 27144 / PCC 6301 / SAUG 1402/1) (Anacystis nidulans).